We begin with the raw amino-acid sequence, 185 residues long: Elongation factor P (185 aa).

It belongs to the elongation factor P family.

It localises to the cytoplasm. It functions in the pathway protein biosynthesis; polypeptide chain elongation. In terms of biological role, involved in peptide bond synthesis. Stimulates efficient translation and peptide-bond synthesis on native or reconstituted 70S ribosomes in vitro. Probably functions indirectly by altering the affinity of the ribosome for aminoacyl-tRNA, thus increasing their reactivity as acceptors for peptidyl transferase. This is Elongation factor P from Listeria innocua serovar 6a (strain ATCC BAA-680 / CLIP 11262).